The following is a 343-amino-acid chain: Heat-inducible transcription repressor HrcA (343 aa).

This sequence belongs to the HrcA family.

Negative regulator of class I heat shock genes (grpE-dnaK-dnaJ and groELS operons). Prevents heat-shock induction of these operons. The polypeptide is Heat-inducible transcription repressor HrcA (Mycoplasma genitalium (strain ATCC 33530 / DSM 19775 / NCTC 10195 / G37) (Mycoplasmoides genitalium)).